We begin with the raw amino-acid sequence, 333 residues long: Glyceraldehyde-3-phosphate dehydrogenase (333 aa).

NAD(+) contacts are provided by residues 11–12 (RI), aspartate 33, arginine 78, and serine 120. Residues 149–151 (SCT), threonine 180, 209–210 (TG), and arginine 232 contribute to the D-glyceraldehyde 3-phosphate site. Cysteine 150 serves as the catalytic Nucleophile. Cysteine 150 carries the S-nitrosocysteine modification. Asparagine 314 lines the NAD(+) pocket.

Belongs to the glyceraldehyde-3-phosphate dehydrogenase family. Homotetramer. S-nitrosylation of Cys-150 leads to translocation to the nucleus.

The protein localises to the cytoplasm. It is found in the cytosol. The protein resides in the cytoskeleton. It localises to the nucleus. The enzyme catalyses D-glyceraldehyde 3-phosphate + phosphate + NAD(+) = (2R)-3-phospho-glyceroyl phosphate + NADH + H(+). It catalyses the reaction S-nitroso-L-cysteinyl-[GAPDH] + L-cysteinyl-[protein] = L-cysteinyl-[GAPDH] + S-nitroso-L-cysteinyl-[protein]. Its pathway is carbohydrate degradation; glycolysis; pyruvate from D-glyceraldehyde 3-phosphate: step 1/5. Has both glyceraldehyde-3-phosphate dehydrogenase and nitrosylase activities, thereby playing a role in glycolysis and nuclear functions, respectively. Glyceraldehyde-3-phosphate dehydrogenase is a key enzyme in glycolysis that catalyzes the first step of the pathway by converting D-glyceraldehyde 3-phosphate (G3P) into 3-phospho-D-glyceroyl phosphate. Participates in nuclear events including transcription, RNA transport, DNA replication and apoptosis. Nuclear functions are probably due to the nitrosylase activity that mediates cysteine S-nitrosylation of nuclear target proteins such as SIRT1, HDAC2 and PRKDC. The chain is Glyceraldehyde-3-phosphate dehydrogenase from Danio rerio (Zebrafish).